Consider the following 351-residue polypeptide: Histidinol-phosphate aminotransferase (351 aa).

Lys215 is subject to N6-(pyridoxal phosphate)lysine.

The protein belongs to the class-II pyridoxal-phosphate-dependent aminotransferase family. Histidinol-phosphate aminotransferase subfamily. Pyridoxal 5'-phosphate serves as cofactor.

The catalysed reaction is L-histidinol phosphate + 2-oxoglutarate = 3-(imidazol-4-yl)-2-oxopropyl phosphate + L-glutamate. Its pathway is amino-acid biosynthesis; L-histidine biosynthesis; L-histidine from 5-phospho-alpha-D-ribose 1-diphosphate: step 7/9. This Methanocorpusculum labreanum (strain ATCC 43576 / DSM 4855 / Z) protein is Histidinol-phosphate aminotransferase.